Reading from the N-terminus, the 1476-residue chain is Cystic fibrosis transmembrane conductance regulator (1476 aa).

Residues 1–77 (MQKSPLEKAS…QLIHALRRCF (77 aa)) are Cytoplasmic-facing. The chain crosses the membrane as a helical span at residues 78-98 (FWRFLFYGILLYLGEVTKAVQ). The ABC transmembrane type-1 1 domain occupies 81–365 (FLFYGILLYL…TAVQIWYDSF (285 aa)). Over 99–122 (PVLLGRIIASYDPENKVERSIAIY) the chain is Extracellular. A helical membrane pass occupies residues 123-146 (LGIGLCLLFIVRTLLLHPAIFGLH). At 147 to 195 (RIGMQMRTAMFSLIYKKTLKLSSRVLDKISIGQLVSLLSNNLNKFDEGL) the chain is on the cytoplasmic side. A helical membrane pass occupies residues 196 to 216 (ALAHFIWIAPLQVTLLMGLLW). Residues 217 to 222 (DLLQFS) are Extracellular-facing. A helical transmembrane segment spans residues 223–243 (AFCGLGLLIILVIFQAILGKM). The Cytoplasmic portion of the chain corresponds to 244 to 298 (MVKYRDQRAAKINERLVITSEIIDNIYSVKAYCWESAMEKMIENLREVELKMTRK). A helical transmembrane segment spans residues 299-319 (AAYMRFFTSSAFFFSGFFVVF). The Extracellular segment spans residues 320–339 (LSVLPYTVINGIVLRKIFTT). The chain crosses the membrane as a helical span at residues 340 to 358 (ISFCIVLRMSVTRQFPTAV). Residues 359-853 (QIWYDSFGMI…YLRYFTLHKG (495 aa)) lie on the Cytoplasmic side of the membrane. ATP-binding positions include Trp401, 458 to 465 (GSTGSGKT), and Gln493. The 224-residue stretch at 423–646 (SDENNVSFSH…RPDFSSKLMG (224 aa)) folds into the ABC transporter 1 domain. Cys524 carries the S-palmitoyl cysteine lipid modification. 2 positions are modified to phosphoserine: Ser549 and Ser660. Residues 654 to 826 (TEERRSSILT…EEINEEDLKE (173 aa)) are disordered R region. Ser670 is modified (phosphoserine; by PKA). 3 positions are modified to phosphoserine: Ser684, Ser698, and Ser710. A Phosphothreonine modification is found at Thr715. Ser732, Ser763, Ser785, Ser790, and Ser808 each carry phosphoserine. A helical transmembrane segment spans residues 854 to 874 (LLLVLIWCVLVFLVEVAASLF). Residues 854-1153 (LLLVLIWCVL…SSIDTDSLMR (300 aa)) form the ABC transmembrane type-1 2 domain. Residues 875–913 (VLWLLKNNPVNSGNNGTKISNSSYVVIITSTSFYYIFYI) lie on the Extracellular side of the membrane. 2 N-linked (GlcNAc...) asparagine glycosylation sites follow: Asn889 and Asn895. The chain crosses the membrane as a discontinuously helical span at residues 914–934 (YVGVADTLLALSLFRGLPLVH). Residues 935–985 (TLITASKILHRKMLHSILHAPMSTISKLKAGGILNRFSKDIAILDDFLPLT) lie on the Cytoplasmic side of the membrane. The chain crosses the membrane as a helical span at residues 986-1006 (IFDFIQLVFIVIGAIIVVSAL). Residues 1007–1008 (QP) are Extracellular-facing. Residues 1009–1029 (YIFLATVPGLVVFILLRAYFL) form a helical membrane-spanning segment. Topologically, residues 1030-1090 (HTAQQLKQLE…TANWFMYLAT (61 aa)) are cytoplasmic. Residues 1091-1111 (LRWFQMRIDMIFVLFFIVVTF) traverse the membrane as a helical segment. Topologically, residues 1112–1125 (ISILTTGEGEGTAG) are extracellular. Residues 1126 to 1146 (IILTLAMNIMSTLQWAVNSSI) traverse the membrane as a helical segment. The Cytoplasmic portion of the chain corresponds to 1147–1476 (DTDSLMRSVS…TEEEVQETRL (330 aa)). Residues 1208–1439 (VKDLTVKYMD…KSIFQQAISS (232 aa)) enclose the ABC transporter 2 domain. Residues Tyr1215 and 1240 to 1247 (GRTGSGKS) each bind ATP. Residues 1382–1476 (RVLKQAFAGC…TEEEVQETRL (95 aa)) form an interaction with GORASP2 region. Cys1391 carries S-palmitoyl cysteine lipidation. A phosphoserine mark is found at Ser1440 and Ser1452. The disordered stretch occupies residues 1446 to 1476 (FQGRHSSKHKPRTQITALKEETEEEVQETRL). Positions 1466 to 1476 (ETEEEVQETRL) are enriched in acidic residues. Residues 1474–1476 (TRL) carry the PDZ-binding motif.

This sequence belongs to the ABC transporter superfamily. ABCC family. CFTR transporter (TC 3.A.1.202) subfamily. Monomer; does not require oligomerization for channel activity. May form oligomers in the membrane. Interacts with SLC26A3, SLC26A6 and NHERF1. Interacts with SHANK2. Interacts with MYO6. Interacts (via C-terminus) with GOPC (via PDZ domain); this promotes CFTR internalization and thereby decreases channel activity. Interacts with SLC4A7 through NHERF1. Found in a complex with MYO5B and RAB11A. Interacts with ANO1. Interacts with SLC26A8. Interacts with AHCYL1; the interaction increases CFTR activity. Interacts with CSE1L. The core-glycosylated form interacts with GORASP2 (via PDZ GRASP-type 1 domain) in respone to ER stress. Interacts with MARCHF2; the interaction leads to CFTR ubiqtuitination and degradation. Interacts with ADGRG2. Post-translationally, N-glycosylated. Phosphorylated; cAMP treatment promotes phosphorylation and activates the channel. Dephosphorylation decreases the ATPase activity (in vitro). Phosphorylation at PKA sites activates the channel. Phosphorylation at PKC sites enhances the response to phosphorylation by PKA. Phosphorylated by AMPK; this inhibits channel activity. In terms of processing, ubiquitinated, leading to its degradation in the lysosome. Deubiquitination by USP10 in early endosomes enhances its endocytic recycling to the cell membrane. Ubiquitinated by RNF185 during ER stress. Ubiquitinated by MARCHF2. In terms of tissue distribution, expressed in the epididymis (at protein level). In the initial segment of the epididymis, detected on both the luminal and basolateral sides of the ducts where it is expressed in the duct columnar cells as well as in the interstitial smooth muscle cells. Expressed in sperm in the caput. In the cauda, detected along the luminal border but not continuously and is also expressed on the basolateral surface. Within the caudal lumen, detected on sperm. Isoform 1: Expressed in a variety of epithelial tissues including colon, kidney, lung, small intestine, pancreatic duct and testis. Isoform 2: Expressed only in testis. Isoform 3: Expressed only in testis.

It is found in the apical cell membrane. It localises to the early endosome membrane. The protein resides in the cell membrane. Its subcellular location is the recycling endosome membrane. The protein localises to the endoplasmic reticulum membrane. It is found in the nucleus. It catalyses the reaction ATP + H2O + closed Cl(-) channel = ADP + phosphate + open Cl(-) channel.. The enzyme catalyses chloride(in) = chloride(out). The catalysed reaction is hydrogencarbonate(in) = hydrogencarbonate(out). It carries out the reaction ATP + H2O = ADP + phosphate + H(+). Functionally, epithelial ion channel that plays an important role in the regulation of epithelial ion and water transport and fluid homeostasis. Mediates the transport of chloride ions across the cell membrane. Possesses an intrinsic ATPase activity and utilizes ATP to gate its channel; the passive flow of anions through the channel is gated by cycles of ATP binding and hydrolysis by the ATP-binding domains. The ion channel is also permeable to HCO(3)(-); selectivity depends on the extracellular chloride concentration. Exerts its function also by modulating the activity of other ion channels and transporters. Contributes to the regulation of the pH and the ion content of the epithelial fluid layer. Modulates the activity of the epithelial sodium channel (ENaC) complex, in part by regulating the cell surface expression of the ENaC complex. May regulate bicarbonate secretion and salvage in epithelial cells by regulating the transporter SLC4A7. Can inhibit the chloride channel activity of ANO1. Plays a role in the chloride and bicarbonate homeostasis during sperm epididymal maturation and capacitation. This is Cystic fibrosis transmembrane conductance regulator from Mus musculus (Mouse).